The chain runs to 208 residues: UPF0637 protein Bcer98_2662 (208 aa).

Belongs to the UPF0637 family.

The polypeptide is UPF0637 protein Bcer98_2662 (Bacillus cytotoxicus (strain DSM 22905 / CIP 110041 / 391-98 / NVH 391-98)).